Consider the following 243-residue polypeptide: Ornithine decarboxylase antizyme 3 (243 aa).

A phosphoserine mark is found at S6, S9, and S12.

The protein belongs to the ODC antizyme family. Interacts with ODC1 and thereby sterically blocks ODC homodimerization. Interacts with AZIN2; this interaction disrupts the interaction between the antizyme and ODC1. Interacts with GGN. Testis specific. Expressed throughout the differentiation process from spermatids to spermatozoa in the inner part of the seminiferous tubules.

It localises to the nucleus. The protein resides in the cytoplasm. Ornithine decarboxylase (ODC) antizyme protein that negatively regulates ODC activity and intracellular polyamine biosynthesis and uptake in response to increased intracellular polyamine levels. Binds to ODC monomers, inhibiting the assembly of the functional ODC homodimers. Does not target the ODC monomers for degradation, which allows a protein synthesis-independent restoration of ODC activity. Stabilizes AZIN2 by interfering with its ubiquitination. Involved in the translocation of AZNI2 from ER-Golgi intermediate compartment (ERGIC) to the cytosol. Probably plays a key role in spermatogenesis by regulating the intracellular concentration of polyamines in haploid germ cells. In Mus musculus (Mouse), this protein is Ornithine decarboxylase antizyme 3 (Oaz3).